Reading from the N-terminus, the 283-residue chain is MQKISNEIFLCSICNVSSGDCPEDCKYCTQSAHYGTQIQRYKNKSIDKIVQEAKTLREYGALGFCLVTAGRSLESQKCEYIAKAASAIKKADLGLHIIACCGSADVDSLKYLKTNGVDSYNHNLETSKEFFPHICTTHTWKERFETCENTLKAELGLLSGGIFGLGESWGDRIELLKHLQILSPHTSPLNFYIANESLPLPMQTLSPQEALECVTLAREYLPNTRLMIAGGREAVFGDNQKPLFEAGINGVVLGDYLTTDGKAPKDDVAMIESYGYVAATNCH.

Residues Lys-3–Arg-232 enclose the Radical SAM core domain. The [4Fe-4S] cluster site is built by Cys-21, Cys-25, and Cys-28. Positions 65, 100, and 225 each coordinate [2Fe-2S] cluster.

The protein belongs to the radical SAM superfamily. Biotin synthase family. Homodimer. [4Fe-4S] cluster is required as a cofactor. The cofactor is [2Fe-2S] cluster.

The catalysed reaction is (4R,5S)-dethiobiotin + (sulfur carrier)-SH + 2 reduced [2Fe-2S]-[ferredoxin] + 2 S-adenosyl-L-methionine = (sulfur carrier)-H + biotin + 2 5'-deoxyadenosine + 2 L-methionine + 2 oxidized [2Fe-2S]-[ferredoxin]. It functions in the pathway cofactor biosynthesis; biotin biosynthesis; biotin from 7,8-diaminononanoate: step 2/2. In terms of biological role, catalyzes the conversion of dethiobiotin (DTB) to biotin by the insertion of a sulfur atom into dethiobiotin via a radical-based mechanism. In Helicobacter hepaticus (strain ATCC 51449 / 3B1), this protein is Biotin synthase.